Consider the following 647-residue polypeptide: Sodium/nucleoside cotransporter 1 (647 aa).

Topologically, residues 1-79 are cytoplasmic; the sequence is MEDNTPRQRD…VRRFCREHTQ (79 aa). The segment at 34–58 is disordered; sequence EGRAPGSDSSPAEVGGGWSKAGPEH. The chain crosses the membrane as a helical span at residues 80-103; the sequence is LFRWICTGLLCTAFAAFLLIACLL. The Extracellular portion of the chain corresponds to 104-108; that stretch reads DFQRA. Residues 109-127 traverse the membrane as a helical segment; sequence LALFVLFCVVLFFLAHSLL. Over 128-146 the chain is Cytoplasmic; sequence KRLLGPKLLRCVKPLRHPC. The chain crosses the membrane as a helical span at residues 147–166; it reads LNLWFKRGLALAAFLGLVLW. The Extracellular segment spans residues 167 to 177; sequence LVLDTAQRPEQ. A helical membrane pass occupies residues 178-194; that stretch reads LVSFGGICVFILLLFAG. The Cytoplasmic portion of the chain corresponds to 195–200; that stretch reads SKHHRA. Residues 201–221 traverse the membrane as a helical segment; it reads VSWRAVSWGLGLQFALGLFVI. The Extracellular segment spans residues 222–260; sequence RTEPGFIAFQWLGDQIQIFLSYTEAGSSFVFGEALVKDV. Residues 261–282 form a helical membrane-spanning segment; it reads FAFQVLPIIVFFSCAMSVLYYV. The Cytoplasmic segment spans residues 283–293; that stretch reads GLMQWVILKIS. A helical membrane pass occupies residues 294 to 317; sequence WLMQATMGTTATETLSVAGNIFVS. Residues 318–336 lie on the Extracellular side of the membrane; the sequence is QTEAPLLIRPYLADMTLSE. A helical transmembrane segment spans residues 337-359; that stretch reads IHVVMTGGYATIAGSLLGAYISF. The Cytoplasmic portion of the chain corresponds to 360–365; it reads GIDAAS. A helical membrane pass occupies residues 366-385; it reads LIAASVMAAPCALALSKLVY. Over 386 to 422 the chain is Extracellular; the sequence is PEVEESKFKREEGVKLTYGDAQNLLEAASSGAAMSVR. A helical transmembrane segment spans residues 423–445; that stretch reads VVTNIAANLIAFLAVLAFINAAL. The Cytoplasmic portion of the chain corresponds to 446 to 456; that stretch reads SWLGDMVDVQG. A helical transmembrane segment spans residues 457 to 478; the sequence is LSFQLICSYVLRPVAFLMGVAW. At 479-533 the chain is on the extracellular side; the sequence is EDCPVVAELLGMKLFLNEFVAYQELSGYKQRRLAGAEEWVGSRKQWISVRAEILT. A helical transmembrane segment spans residues 534-557; that stretch reads TYALCGFANFSSIGIMLGGLTSMV. At 558-568 the chain is on the cytoplasmic side; sequence PQRKGDFSQIV. The chain crosses the membrane as a helical span at residues 569–591; that stretch reads LRALCTGACVSLVNACVAGILYV. Residues 592–647 are Extracellular-facing; that stretch reads PRGAEVDCVSFLNTTLSSSSFEVYQCCRQFFQSTSLEFSPEALDNCCRFYNHTICV. N-linked (GlcNAc...) asparagine glycans are attached at residues Asn-604 and Asn-642.

The protein belongs to the concentrative nucleoside transporter (CNT) (TC 2.A.41) family. N-glycosylated. N-glycosylation is required for localization to the plasma membrane and the transporter activity.

It is found in the cell membrane. It localises to the apical cell membrane. It carries out the reaction uridine(out) + Na(+)(out) = uridine(in) + Na(+)(in). It catalyses the reaction thymidine(out) + Na(+)(out) = thymidine(in) + Na(+)(in). The catalysed reaction is cytidine(out) + Na(+)(out) = cytidine(in) + Na(+)(in). The enzyme catalyses adenosine(out) + Na(+)(out) = adenosine(in) + Na(+)(in). Its activity is regulated as follows. Due to its high apparent affinity but slow transport, adenosine could act as a negative regulator of pyrimidine transport under some conditions. Functionally, sodium and pyrimidine nucleoside symporter of the plasma membrane that imports uridine, thymidine and cytidine into cells by coupling their transport to the transmembrane sodium electrochemical gradient. Also transports adenosine, an atypical substrate transported with high apparent affinity, but low maximum velocity. Therefore, exhibits the transport characteristics of the nucleoside transport system cit or N2 subtype (N2/cit). Involved in renal nucleoside (re)absorption. The polypeptide is Sodium/nucleoside cotransporter 1 (SLC28A1) (Sus scrofa (Pig)).